Consider the following 493-residue polypeptide: MPSSTAMKHQDIGWHFDNTYAQLPGHFYTKLHPVPVHEPRLVIVNNALAEELGLNFKASSEDELAQLFSGNQLPEGAEPLAQAYAGHQFGHFTYLGDGRAHLIGEHLTPDGKRVDIQFKGSGQTPYARRGDGRAALGPMLREYIISEAMHALGIPTTRSLAIATTGESVYRETVLQGAILTRVASSHLRVGTFEYLAAQEDKAGLKQLTDYAIQRHYPEIIDSDTPYLELLKAVMACQIKLITEWLRVGFIHGVMNTDNMAVSCQTIDYGPCAFMDNYDPNTVFSSIDHMGRYAYANQPRIAQWNLARFAEAILPLLHENIEKAAAMAEEAIQSFKALFQQEWLAMMRRKLGLFGEEKEDMEFITGLLQWMQRSHADYTNTFRDLMDEHFPEEPHYQDQEFKHWYDRWQQRLEHNTKPFPSSLCLMGATNPVVIPRNHRVEAALNAVEQNADFSKLHELLDVLSEPYKDKEKYTEFKNPPAPKERVSQTFCGT.

G96, G98, R99, K119, D131, G132, R182, and R189 together coordinate ATP. D258 acts as the Proton acceptor in catalysis. Residues N259 and D268 each contribute to the Mg(2+) site. D268 serves as a coordination point for ATP. The disordered stretch occupies residues 471-493 (EKYTEFKNPPAPKERVSQTFCGT).

This sequence belongs to the SELO family. Mg(2+) serves as cofactor. It depends on Mn(2+) as a cofactor.

It carries out the reaction L-seryl-[protein] + ATP = 3-O-(5'-adenylyl)-L-seryl-[protein] + diphosphate. The enzyme catalyses L-threonyl-[protein] + ATP = 3-O-(5'-adenylyl)-L-threonyl-[protein] + diphosphate. It catalyses the reaction L-tyrosyl-[protein] + ATP = O-(5'-adenylyl)-L-tyrosyl-[protein] + diphosphate. The catalysed reaction is L-histidyl-[protein] + UTP = N(tele)-(5'-uridylyl)-L-histidyl-[protein] + diphosphate. It carries out the reaction L-seryl-[protein] + UTP = O-(5'-uridylyl)-L-seryl-[protein] + diphosphate. The enzyme catalyses L-tyrosyl-[protein] + UTP = O-(5'-uridylyl)-L-tyrosyl-[protein] + diphosphate. Functionally, nucleotidyltransferase involved in the post-translational modification of proteins. It can catalyze the addition of adenosine monophosphate (AMP) or uridine monophosphate (UMP) to a protein, resulting in modifications known as AMPylation and UMPylation. The sequence is that of Protein nucleotidyltransferase YdiU from Nitrosococcus oceani (strain ATCC 19707 / BCRC 17464 / JCM 30415 / NCIMB 11848 / C-107).